Reading from the N-terminus, the 89-residue chain is Small ribosomal subunit protein uS15 (89 aa).

The protein belongs to the universal ribosomal protein uS15 family. Part of the 30S ribosomal subunit. Forms a bridge to the 50S subunit in the 70S ribosome, contacting the 23S rRNA.

Functionally, one of the primary rRNA binding proteins, it binds directly to 16S rRNA where it helps nucleate assembly of the platform of the 30S subunit by binding and bridging several RNA helices of the 16S rRNA. Its function is as follows. Forms an intersubunit bridge (bridge B4) with the 23S rRNA of the 50S subunit in the ribosome. In Yersinia enterocolitica serotype O:8 / biotype 1B (strain NCTC 13174 / 8081), this protein is Small ribosomal subunit protein uS15.